The sequence spans 222 residues: Kunitz trypsin inhibitor 3 (222 aa).

Positions 1–23 (MEKLTLSFITLTVLSAIFTAASA) are cleaved as a signal peptide. N-linked (GlcNAc...) asparagine glycosylation occurs at Asn-65. Cystine bridges form between Cys-72-Cys-119 and Cys-165-Cys-173. The N-linked (GlcNAc...) asparagine glycan is linked to Asn-175.

The protein belongs to the protease inhibitor I3 (leguminous Kunitz-type inhibitor) family.

Exhibits Kunitz trypsin protease inhibitor activity. The chain is Kunitz trypsin inhibitor 3 from Arabidopsis thaliana (Mouse-ear cress).